Consider the following 483-residue polypeptide: uncharacterized protein (483 aa).

This is an uncharacterized protein from Acanthamoeba polyphaga mimivirus (APMV).